Consider the following 532-residue polypeptide: Probable bifunctional tRNA threonylcarbamoyladenosine biosynthesis protein (532 aa).

The interval 1–323 (MRVLGVEGTA…FRPDEVSVTW (323 aa)) is kae1. Residues histidine 107 and histidine 111 each coordinate Fe cation. L-threonylcarbamoyladenylate is bound by residues 128–132 (NASGA), aspartate 160, glycine 173, glutamate 177, and asparagine 256. Aspartate 284 serves as a coordination point for Fe cation. Positions 329–532 (PARDPGADAV…GRYQDDPETA (204 aa)) constitute a Protein kinase domain. ATP contacts are provided by residues 338–346 (VRQGAEATV) and lysine 355. The Proton acceptor; for kinase activity role is filled by aspartate 444.

The protein in the N-terminal section; belongs to the KAE1 / TsaD family. It in the C-terminal section; belongs to the protein kinase superfamily. Tyr protein kinase family. BUD32 subfamily. Component of the KEOPS complex that consists of Kae1, Bud32, Cgi121 and Pcc1; the whole complex dimerizes. Fe(2+) is required as a cofactor.

It is found in the cytoplasm. The enzyme catalyses L-seryl-[protein] + ATP = O-phospho-L-seryl-[protein] + ADP + H(+). It carries out the reaction L-threonyl-[protein] + ATP = O-phospho-L-threonyl-[protein] + ADP + H(+). It catalyses the reaction L-threonylcarbamoyladenylate + adenosine(37) in tRNA = N(6)-L-threonylcarbamoyladenosine(37) in tRNA + AMP + H(+). In terms of biological role, required for the formation of a threonylcarbamoyl group on adenosine at position 37 (t(6)A37) in tRNAs that read codons beginning with adenine. Is a component of the KEOPS complex that is probably involved in the transfer of the threonylcarbamoyl moiety of threonylcarbamoyl-AMP (TC-AMP) to the N6 group of A37. The Kae1 domain likely plays a direct catalytic role in this reaction. The Bud32 domain probably displays kinase activity that regulates Kae1 function. This chain is Probable bifunctional tRNA threonylcarbamoyladenosine biosynthesis protein, found in Halobacterium salinarum (strain ATCC 700922 / JCM 11081 / NRC-1) (Halobacterium halobium).